Reading from the N-terminus, the 443-residue chain is uncharacterized protein (443 aa).

This is an uncharacterized protein from Saccharomyces cerevisiae (strain ATCC 204508 / S288c) (Baker's yeast).